The chain runs to 366 residues: uncharacterized protein (366 aa).

The PINc domain maps to 169-280; sequence ILDTSVIIDG…LNKVCELQKV (112 aa). Asp-250 serves as a coordination point for Mg(2+). Positions 295–356 constitute a TRAM domain; it reads VVLPGEEMNV…LQTAAGRMIF (62 aa).

Belongs to the ycf81 family. The protein in the central section; belongs to the PINc/VapC protein family. Requires Mg(2+) as cofactor.

Functionally, an RNase. This is an uncharacterized protein from Bacillus subtilis (strain 168).